Here is a 94-residue protein sequence, read N- to C-terminus: Protein RESPONSE TO LOW SULFUR 2 (94 aa).

Residues V15–E63 are a coiled coil.

In terms of biological role, may be involved in defense responses monitoring. Probably implicated into osmotic stress signaling. This is Protein RESPONSE TO LOW SULFUR 2 from Arabidopsis thaliana (Mouse-ear cress).